We begin with the raw amino-acid sequence, 160 residues long: Large ribosomal subunit protein eL21 (160 aa).

Basic and acidic residues-rich tracts occupy residues 112 to 123 and 136 to 145; these read NDQKKKEAKEKG and REAHFVRTNG. The interval 112–145 is disordered; the sequence is NDQKKKEAKEKGTWVQLKRQPAPPREAHFVRTNG.

This sequence belongs to the eukaryotic ribosomal protein eL21 family. In terms of assembly, component of the large ribosomal subunit.

The protein resides in the cytoplasm. Its subcellular location is the cytosol. It is found in the endoplasmic reticulum. In terms of biological role, component of the large ribosomal subunit. The ribosome is a large ribonucleoprotein complex responsible for the synthesis of proteins in the cell. The chain is Large ribosomal subunit protein eL21 (RPL21) from Oryctolagus cuniculus (Rabbit).